Reading from the N-terminus, the 412-residue chain is Serine hydroxymethyltransferase (412 aa).

(6S)-5,6,7,8-tetrahydrofolate-binding positions include Leu117 and 121-123 (GHL). The residue at position 226 (Lys226) is an N6-(pyridoxal phosphate)lysine. 349–351 (SPF) is a (6S)-5,6,7,8-tetrahydrofolate binding site.

This sequence belongs to the SHMT family. In terms of assembly, homodimer. Pyridoxal 5'-phosphate serves as cofactor.

The protein localises to the cytoplasm. The catalysed reaction is (6R)-5,10-methylene-5,6,7,8-tetrahydrofolate + glycine + H2O = (6S)-5,6,7,8-tetrahydrofolate + L-serine. Its pathway is one-carbon metabolism; tetrahydrofolate interconversion. The protein operates within amino-acid biosynthesis; glycine biosynthesis; glycine from L-serine: step 1/1. Catalyzes the reversible interconversion of serine and glycine with tetrahydrofolate (THF) serving as the one-carbon carrier. This reaction serves as the major source of one-carbon groups required for the biosynthesis of purines, thymidylate, methionine, and other important biomolecules. Also exhibits THF-independent aldolase activity toward beta-hydroxyamino acids, producing glycine and aldehydes, via a retro-aldol mechanism. The polypeptide is Serine hydroxymethyltransferase (Oleidesulfovibrio alaskensis (strain ATCC BAA-1058 / DSM 17464 / G20) (Desulfovibrio alaskensis)).